The sequence spans 92 residues: Small ribosomal subunit protein uS19 (92 aa).

It belongs to the universal ribosomal protein uS19 family.

Functionally, protein S19 forms a complex with S13 that binds strongly to the 16S ribosomal RNA. The sequence is that of Small ribosomal subunit protein uS19 from Hyphomonas neptunium (strain ATCC 15444).